Consider the following 601-residue polypeptide: Elongation factor 4 (601 aa).

Residues 6–188 (QCIRNFSIIA…AVVAKVPPPQ (183 aa)) form the tr-type G domain. GTP-binding positions include 18–23 (DHGKST) and 135–138 (NKID).

This sequence belongs to the TRAFAC class translation factor GTPase superfamily. Classic translation factor GTPase family. LepA subfamily.

The protein resides in the cell membrane. It catalyses the reaction GTP + H2O = GDP + phosphate + H(+). Required for accurate and efficient protein synthesis under certain stress conditions. May act as a fidelity factor of the translation reaction, by catalyzing a one-codon backward translocation of tRNAs on improperly translocated ribosomes. Back-translocation proceeds from a post-translocation (POST) complex to a pre-translocation (PRE) complex, thus giving elongation factor G a second chance to translocate the tRNAs correctly. Binds to ribosomes in a GTP-dependent manner. This Desulfitobacterium hafniense (strain DSM 10664 / DCB-2) protein is Elongation factor 4.